The following is a 147-amino-acid chain: UPF0306 protein YhbP (147 aa).

The protein belongs to the UPF0306 family.

This is UPF0306 protein YhbP from Salmonella arizonae (strain ATCC BAA-731 / CDC346-86 / RSK2980).